The primary structure comprises 674 residues: MSLMKERKPKKPHYIPRPPGKPFKYKCFQCPFTCNEKSHLFNHMKYGLCKNSITVVTDQDRIIKNPKVNSMDQNQTSNEPFAKSSVPAINSSLESKMLHSVAREEAKENLDLKNEPKSHAEKTTVSKEFTLSPPVAISQINKPPSLDGVMRPSAFIPVGEHRVKKGAENRTIPELTSISAEPAKGVHSIKSAFHSLPTPWKSGLVSPDFSQKSSIPRYIRPMISEYPPQFYSEAGLPAVFSPYLFPQTECENPMLSIYSTPDQRPYLPHPLQPSGLPLPKPINAPFEHYRLLQQFQQNPQLHYGFYRPTEHPYFSYGLKVPPAPGLSKEHTSQSMDSPTFIYPSSHPSRLYPLEGFQKLFEIQKETPPVLAKNLDSKSDSESVKMSPRAGSAATGSPERPSPTNFTQSSQGHEGIFDLSTKSISTSDKIGKDFTSGKAMRKSTDSQTIISRENSPSFGNDGVQSHSEGITVTDDAVHDDTIAPLNLSKKSEVESRDIVDTVNNSDFTNERVGFMEMQDLPLNLSVKDSGSNHNTLCADERVLLPRQSTSPPVYQAIQTTDNRAPTTTGIHSLGIIENCDEQKQSAAVALCQLATSSPGVPPRGTEDEFPEKETVVPEQVQPRSPAAQETETDVGARGQKRTNSKELGKSQSSTKKQKAVDSGRMFTLRKRPRVS.

The CCHC-type zinc-finger motif lies at Y25–N51. 4 residues coordinate Zn(2+): C27, C30, H43, and C49. 3 disordered regions span residues E105 to V125, L370 to S466, and T594 to S674. Polar residues-rich tracts occupy residues S401–G411 and D444–S466.

It localises to the nucleus. Its function is as follows. Transcription factor involved in epidermis differentiation. This chain is Zinc finger protein 750 (znf750), found in Xenopus laevis (African clawed frog).